A 300-amino-acid polypeptide reads, in one-letter code: Ferredoxin/F(420)H(2)-dependent CoB-CoM heterodisulfide reductase subunit B (300 aa).

It belongs to the HdrB family. As to quaternary structure, the ferredoxin/F(420)H(2)-dependent CoB-CoM heterodisulfide reductase is composed of three subunits; HdrA2, HdrB2 and HdrC2. Requires [4Fe-4S] cluster as cofactor.

The protein localises to the cytoplasm. It carries out the reaction coenzyme B + coenzyme M + 2 oxidized [2Fe-2S]-[ferredoxin] = coenzyme M-coenzyme B heterodisulfide + 2 reduced [2Fe-2S]-[ferredoxin] + 2 H(+). The catalysed reaction is coenzyme B + 2 oxidized coenzyme F420-(gamma-L-Glu)(n) + coenzyme M + 2 reduced [2Fe-2S]-[ferredoxin] + 4 H(+) = coenzyme M-coenzyme B heterodisulfide + 2 reduced coenzyme F420-(gamma-L-Glu)(n) + 2 oxidized [2Fe-2S]-[ferredoxin]. Its pathway is cofactor metabolism; coenzyme M-coenzyme B heterodisulfide reduction; coenzyme B and coenzyme M from coenzyme M-coenzyme B heterodisulfide: step 1/1. In terms of biological role, part of a complex that catalyzes the reversible reduction of CoM-S-S-CoB to the thiol-coenzymes H-S-CoM (coenzyme M) and H-S-CoB (coenzyme B). Catalyzes the transfer of electrons from ferredoxin to CoM-S-S-CoB during methanogenesis from acetate. Electrons transfer from ferredoxin to CoM-S-S-CoB via HdrA2, HdrC2 and HdrB2. In addition, the complex can use electron bifurcation to direct electron pairs from reduced coenzyme F420 towards the reduction of both ferredoxin and CoB-CoM heterodisulfide. This activity may take place during Fe(III)-dependent anaerobic methane oxidation. The polypeptide is Ferredoxin/F(420)H(2)-dependent CoB-CoM heterodisulfide reductase subunit B (Methanosarcina acetivorans (strain ATCC 35395 / DSM 2834 / JCM 12185 / C2A)).